The sequence spans 197 residues: MKNHPYRDMTAAMVRTGILGFGGGPSVIPLIRHEAVNKYKWIDDDEFGEILAIANALPGPIATKMAAYLGFKLKGTLGAIVAILAHILPTCLAMVGLFAAVNVLSHSAIVAGMIGAVTPVIAVMLGIMAYEFGQKALKGFGWVTGILFFIIAFIGLQTLQINPGLVIIIFLAYGAFHFKLKDKITNKHSKDKGMSAS.

The next 6 helical transmembrane spans lie at 11-31 (AAMV…IPLI), 50-70 (ILAI…AYLG), 79-99 (AIVA…GLFA), 108-128 (AIVA…LGIM), 136-156 (ALKG…FIGL), and 158-178 (TLQI…AFHF).

Belongs to the chromate ion transporter (CHR) (TC 2.A.51) family.

It localises to the cell membrane. This is an uncharacterized protein from Bacillus subtilis (strain 168).